The primary structure comprises 208 residues: Large ribosomal subunit protein bL17 (208 aa).

The tract at residues 122 to 208 is disordered; the sequence is TEKKKKKPAK…ASEEAPPKTE (87 aa). Over residues 151–179 the composition is skewed to low complexity; it reads ADTPAPAAEESAPAKAAEPEAEAAAPEAE.

It belongs to the bacterial ribosomal protein bL17 family. As to quaternary structure, part of the 50S ribosomal subunit. Contacts protein L32.

The polypeptide is Large ribosomal subunit protein bL17 (Desulfosudis oleivorans (strain DSM 6200 / JCM 39069 / Hxd3) (Desulfococcus oleovorans)).